The following is a 416-amino-acid chain: Carboxypeptidase B (416 aa).

The first 15 residues, 1 to 15 (MAFLILVTLALASAH), serve as a signal peptide directing secretion. The propeptide at 16 to 109 (YSGEHFEGEK…LEGQFGRQVP (94 aa)) is activation peptide. The Peptidase M14 domain maps to 117–411 (KYNRWETIEA…LAIKHLARYV (295 aa)). Zn(2+)-binding residues include histidine 175 and glutamate 178. Substrate-binding positions include 175–178 (HARE), arginine 233, and 250–251 (TR). Cystine bridges form between cysteine 244–cysteine 267 and cysteine 258–cysteine 272. Histidine 303 lines the Zn(2+) pocket. Substrate is bound by residues 304 to 305 (SY) and tyrosine 355. Glutamate 377 acts as the Proton donor/acceptor in catalysis.

The protein belongs to the peptidase M14 family. It depends on Zn(2+) as a cofactor.

It localises to the secreted. The protein localises to the zymogen granule lumen. It catalyses the reaction Preferential release of a C-terminal lysine or arginine amino acid.. This Canis lupus familiaris (Dog) protein is Carboxypeptidase B (CPB1).